A 159-amino-acid polypeptide reads, in one-letter code: Major strawberry allergen Fra a 1-C (159 aa).

It belongs to the BetVI family. Monomer.

The protein is Major strawberry allergen Fra a 1-C of Fragaria ananassa (Strawberry).